The sequence spans 269 residues: Formamidopyrimidine-DNA glycosylase (269 aa).

The Schiff-base intermediate with DNA role is filled by P2. E3 functions as the Proton donor in the catalytic mechanism. K57 functions as the Proton donor; for beta-elimination activity in the catalytic mechanism. Residues H90, R109, and R150 each contribute to the DNA site. The FPG-type zinc-finger motif lies at 235–269 (QVYGRKGEPCRVCGTPVVATKHAQRATFYCRHCQK). R259 (proton donor; for delta-elimination activity) is an active-site residue.

Belongs to the FPG family. Monomer. Requires Zn(2+) as cofactor.

It catalyses the reaction Hydrolysis of DNA containing ring-opened 7-methylguanine residues, releasing 2,6-diamino-4-hydroxy-5-(N-methyl)formamidopyrimidine.. It carries out the reaction 2'-deoxyribonucleotide-(2'-deoxyribose 5'-phosphate)-2'-deoxyribonucleotide-DNA = a 3'-end 2'-deoxyribonucleotide-(2,3-dehydro-2,3-deoxyribose 5'-phosphate)-DNA + a 5'-end 5'-phospho-2'-deoxyribonucleoside-DNA + H(+). Functionally, involved in base excision repair of DNA damaged by oxidation or by mutagenic agents. Acts as a DNA glycosylase that recognizes and removes damaged bases. Has a preference for oxidized purines, such as 7,8-dihydro-8-oxoguanine (8-oxoG). Has AP (apurinic/apyrimidinic) lyase activity and introduces nicks in the DNA strand. Cleaves the DNA backbone by beta-delta elimination to generate a single-strand break at the site of the removed base with both 3'- and 5'-phosphates. The chain is Formamidopyrimidine-DNA glycosylase from Salmonella arizonae (strain ATCC BAA-731 / CDC346-86 / RSK2980).